The sequence spans 861 residues: DNA mismatch repair protein MutS (861 aa).

617–624 (GPNMGGKS) contributes to the ATP binding site. The disordered stretch occupies residues 799–822 (ETTSLPHEQPPAAKAKDAPQVPHQ). Over residues 808 to 820 (PPAAKAKDAPQVP) the composition is skewed to low complexity.

This sequence belongs to the DNA mismatch repair MutS family.

Its function is as follows. This protein is involved in the repair of mismatches in DNA. It is possible that it carries out the mismatch recognition step. This protein has a weak ATPase activity. The protein is DNA mismatch repair protein MutS of Pseudomonas putida (strain GB-1).